A 120-amino-acid polypeptide reads, in one-letter code: Acylphosphatase-1 (120 aa).

The residue at position 2 (alanine 2) is an N-acetylalanine. The Acylphosphatase-like domain maps to 8–98; that stretch reads SCEFEVFGRV…YGYANFHIKP (91 aa). Active-site residues include arginine 23 and asparagine 41. Residues 91–120 are disordered; it reads YANFHIKPDPHENRPVHEGLGSSSSHHDSN. The span at 96-107 shows a compositional bias: basic and acidic residues; that stretch reads IKPDPHENRPVH.

Belongs to the acylphosphatase family.

The protein localises to the cytoplasm. The catalysed reaction is an acyl phosphate + H2O = a carboxylate + phosphate + H(+). The chain is Acylphosphatase-1 (Acyp) from Drosophila melanogaster (Fruit fly).